A 448-amino-acid polypeptide reads, in one-letter code: N-succinylarginine dihydrolase (448 aa).

Substrate is bound by residues 19–28 (GGLSYGNVAS), Asn-110, and 137–138 (HR). The active site involves Glu-174. Residue Arg-214 participates in substrate binding. His-250 is an active-site residue. Residues Asp-252 and Asn-365 each contribute to the substrate site. The active-site Nucleophile is the Cys-371.

This sequence belongs to the succinylarginine dihydrolase family. In terms of assembly, homodimer.

It carries out the reaction N(2)-succinyl-L-arginine + 2 H2O + 2 H(+) = N(2)-succinyl-L-ornithine + 2 NH4(+) + CO2. The protein operates within amino-acid degradation; L-arginine degradation via AST pathway; L-glutamate and succinate from L-arginine: step 2/5. Its function is as follows. Catalyzes the hydrolysis of N(2)-succinylarginine into N(2)-succinylornithine, ammonia and CO(2). The polypeptide is N-succinylarginine dihydrolase (Pseudomonas fluorescens (strain ATCC BAA-477 / NRRL B-23932 / Pf-5)).